Consider the following 775-residue polypeptide: Venom dipeptidyl peptidase 4 (775 aa).

The first 23 residues, Met1 to Gly23, serve as a signal peptide directing secretion. N-linked (GlcNAc...) asparagine glycans are attached at residues Asn68 and Asn239. 2 disulfides stabilise this stretch: Cys450/Cys453 and Cys463/Cys481. N-linked (GlcNAc...) asparagine glycosylation is found at Asn473, Asn505, Asn578, and Asn631. Ser639 functions as the Charge relay system in the catalytic mechanism. A disulfide bond links Cys659 and Cys770. Residues Asn689 and Asn694 are each glycosylated (N-linked (GlcNAc...) asparagine). Residues Asp718 and His750 each act as charge relay system in the active site.

Belongs to the peptidase S9B family. DPPIV subfamily. As to expression, expressed by the venom duct.

The protein resides in the secreted. The catalysed reaction is Release of an N-terminal dipeptide, Xaa-Yaa-|-Zaa-, from a polypeptide, preferentially when Yaa is Pro, provided Zaa is neither Pro nor hydroxyproline.. Inhibited by diprotin A. In terms of biological role, venom dipeptidyl-peptidase which removes N-terminal dipeptides sequentially from polypeptides having unsubstituted N-termini provided that the penultimate residue is proline. May process promelittin into its active form and/or modulate the chemotactic activity of immune cells after the insect sting. This Apis mellifera (Honeybee) protein is Venom dipeptidyl peptidase 4.